We begin with the raw amino-acid sequence, 367 residues long: Cystinosin (367 aa).

Residues 1 to 22 (MRRNWLLILTLFLLMFIEKYES) form the signal peptide. The Lumenal portion of the chain corresponds to 23–125 (TVSLTAPPTV…LVIHSRIVSI (103 aa)). Residues Asn36, Asn51, Asn66, Asn84, Asn104, and Asn107 are each glycosylated (N-linked (GlcNAc...) asparagine). Residues 123-189 (VSIINQVIGW…LLWVPYIQEE (67 aa)) form the PQ-loop 1 domain. The helical transmembrane segment at 126-150 (INQVIGWIYFMAWSVSFYPQVIQNW) threads the bilayer. Residues 151-159 (RRKSVIGLS) lie on the Cytoplasmic side of the membrane. The chain crosses the membrane as a helical span at residues 160–179 (FDFLALNLTGFVAYSVFNIG). Asn166 contributes to the L-cystine binding site. Residues 180-202 (LLWVPYIQEEFLLKYPNGVNPVD) are Lumenal-facing. Residues 203–225 (SNDAFFSLHAVALTLIVILQCCL) form a helical membrane-spanning segment. Asp205 is a binding site for H(+). Topologically, residues 226-234 (YERGNQRVS) are cytoplasmic. Residues 235–257 (WPSIGFLVLAWLFVLVTMIVAAV) traverse the membrane as a helical segment. The Lumenal portion of the chain corresponds to 258–263 (GITTWL). Residues 263 to 328 (LQFLFCFSYI…QSYNNDQWTL (66 aa)) enclose the PQ-loop 2 domain. A helical membrane pass occupies residues 264–289 (QFLFCFSYIKLIITLIKYFPQAYMNF). L-cystine is bound by residues Lys273, Lys280, and Tyr281. The Cytoplasmic portion of the chain corresponds to 290-298 (YYKSTKGWS). A helical membrane pass occupies residues 299-308 (IGGVLLDFTG). Position 305 (Asp305) interacts with L-cystine. A H(+)-binding site is contributed by Asp305. Topologically, residues 309-331 (GSFSLLQMFLQSYNNDQWTLIFG) are lumenal. A helical membrane pass occupies residues 332 to 354 (DPTKFGLGVFTIFFDVVFFIQHF). Asp346 serves as a coordination point for H(+). Over 355–367 (YLYRKKPGYDQLN) the chain is Cytoplasmic. Residues 362 to 366 (GYDQL) carry the Lysosomal targeting motif motif.

Belongs to the cystinosin family. Interacts with components of the V-ATPase complex. Interacts with components of the Ragulator complex. Interacts with RRAGA/RagA and RRAGC/RagC. Interacts with AP-3 complex subunit mu (AP3M1 or AP3M2).

Its subcellular location is the lysosome membrane. It is found in the melanosome membrane. It catalyses the reaction L-cystine(out) + H(+)(out) = L-cystine(in) + H(+)(in). With respect to regulation, switches between a lumen- and a cytosol-open conformation: pH induces conformational changes and shifts the equilibrium to facilitate the transition between the lumen- and cytosol-open conformation, thereby promoting cystine transport. Protonation of specific aspartate residues (Asp-205, Asp-305 and Asp-346) favors the cytosol-open conformation. In terms of biological role, cystine/H(+) symporter that mediates export of cystine, the oxidized dimer of cysteine, from lysosomes. Plays an important role in melanin synthesis by catalyzing cystine export from melanosomes, possibly by inhibiting pheomelanin synthesis. In addition to cystine export, also acts as a positive regulator of mTORC1 signaling in kidney proximal tubular cells, via interactions with components of the v-ATPase and Ragulator complexes. Also involved in small GTPase-regulated vesicle trafficking and lysosomal localization of LAMP2A, independently of cystine transporter activity. The chain is Cystinosin from Mus musculus (Mouse).